The primary structure comprises 1774 residues: Protein TIC 214 (1774 aa).

Helical transmembrane passes span 19 to 39, 68 to 88, 91 to 111, 133 to 153, 176 to 196, and 227 to 247; these read IINS…FSIG, FIAG…HLAL, PHTI…WNNH, VFLN…SSML, VGWL…LVWI, and IFSI…PSPI. Over residues 254-268 the composition is skewed to basic and acidic residues; it reads GTSETEERGGTKQDQ. Residues 254–275 are disordered; the sequence is GTSETEERGGTKQDQEVSTEEA.

Belongs to the TIC214 family. As to quaternary structure, part of the Tic complex.

Its subcellular location is the plastid. It localises to the chloroplast inner membrane. Its function is as follows. Involved in protein precursor import into chloroplasts. May be part of an intermediate translocation complex acting as a protein-conducting channel at the inner envelope. The protein is Protein TIC 214 of Aethionema cordifolium (Lebanon stonecress).